The following is a 366-amino-acid chain: Cobalt-precorrin-5B C(1)-methyltransferase (366 aa).

This sequence belongs to the CbiD family.

The enzyme catalyses Co-precorrin-5B + S-adenosyl-L-methionine = Co-precorrin-6A + S-adenosyl-L-homocysteine. Its pathway is cofactor biosynthesis; adenosylcobalamin biosynthesis; cob(II)yrinate a,c-diamide from sirohydrochlorin (anaerobic route): step 6/10. In terms of biological role, catalyzes the methylation of C-1 in cobalt-precorrin-5B to form cobalt-precorrin-6A. This chain is Cobalt-precorrin-5B C(1)-methyltransferase, found in Hahella chejuensis (strain KCTC 2396).